A 533-amino-acid polypeptide reads, in one-letter code: CTP synthase (533 aa).

Residues 1–265 (MTKFIFVTGG…ARYLVRRLGL (265 aa)) are amidoligase domain. A CTP-binding site is contributed by Ser13. Ser13 is a UTP binding site. 14–19 (GLGKGI) contributes to the ATP binding site. Tyr54 serves as a coordination point for L-glutamine. Asp71 contributes to the ATP binding site. Mg(2+)-binding residues include Asp71 and Glu139. CTP contacts are provided by residues 146–148 (DIE), 186–191 (KTKPTQ), and Lys222. Residues 186 to 191 (KTKPTQ) and Lys222 contribute to the UTP site. The Glutamine amidotransferase type-1 domain maps to 290–532 (EIAIVGKYVK…VRAARERKYG (243 aa)). Gly351 is a binding site for L-glutamine. The active-site Nucleophile; for glutamine hydrolysis is the Cys378. L-glutamine contacts are provided by residues 379–382 (FGFQ), Glu402, and Arg459. Residues His505 and Glu507 contribute to the active site.

Belongs to the CTP synthase family. In terms of assembly, homotetramer.

It catalyses the reaction UTP + L-glutamine + ATP + H2O = CTP + L-glutamate + ADP + phosphate + 2 H(+). The enzyme catalyses L-glutamine + H2O = L-glutamate + NH4(+). It carries out the reaction UTP + NH4(+) + ATP = CTP + ADP + phosphate + 2 H(+). The protein operates within pyrimidine metabolism; CTP biosynthesis via de novo pathway; CTP from UDP: step 2/2. Its activity is regulated as follows. Allosterically activated by GTP, when glutamine is the substrate; GTP has no effect on the reaction when ammonia is the substrate. The allosteric effector GTP functions by stabilizing the protein conformation that binds the tetrahedral intermediate(s) formed during glutamine hydrolysis. Inhibited by the product CTP, via allosteric rather than competitive inhibition. Catalyzes the ATP-dependent amination of UTP to CTP with either L-glutamine or ammonia as the source of nitrogen. Regulates intracellular CTP levels through interactions with the four ribonucleotide triphosphates. This is CTP synthase from Thermococcus gammatolerans (strain DSM 15229 / JCM 11827 / EJ3).